Here is a 556-residue protein sequence, read N- to C-terminus: Polypeptide N-acetylgalactosaminyltransferase 13 (556 aa).

Residues 1-4 (MRRF) lie on the Cytoplasmic side of the membrane. A helical; Signal-anchor for type II membrane protein membrane pass occupies residues 5–27 (VYCKVVLATSLMWVLVDVFLLLY). Residues 28 to 556 (FSECNKCDDK…WLLRNMTLGT (529 aa)) lie on the Lumenal side of the membrane. N-linked (GlcNAc...) asparagine glycans are attached at residues Asn-94 and Asn-116. Cystine bridges form between Cys-105-Cys-338, Cys-329-Cys-407, Cys-441-Cys-458, Cys-481-Cys-496, and Cys-522-Cys-539. The interval 114 to 224 (LPNTSVVIVF…LGWLEPLLAR (111 aa)) is catalytic subdomain A. Positions 155 and 185 each coordinate substrate. The Mn(2+) site is built by Asp-208 and His-210. The catalytic subdomain B stretch occupies residues 284 to 346 (PVRTPTMAGG…TCSHVGHVFR (63 aa)). Trp-315 is a binding site for substrate. Residue His-343 coordinates Mn(2+). Substrate contacts are provided by Arg-346 and Tyr-351. The Ricin B-type lectin domain maps to 428–550 (YSLGEIRNVE…GSRSQQWLLR (123 aa)). Asn-551 is a glycosylation site (N-linked (GlcNAc...) asparagine).

Belongs to the glycosyltransferase 2 family. GalNAc-T subfamily. Mn(2+) serves as cofactor. As to expression, specifically expressed in neuronal cells. Not expressed in glial cells such as astrocytes. Expressed at low level.

The protein resides in the golgi apparatus membrane. The enzyme catalyses L-seryl-[protein] + UDP-N-acetyl-alpha-D-galactosamine = a 3-O-[N-acetyl-alpha-D-galactosaminyl]-L-seryl-[protein] + UDP + H(+). The catalysed reaction is L-threonyl-[protein] + UDP-N-acetyl-alpha-D-galactosamine = a 3-O-[N-acetyl-alpha-D-galactosaminyl]-L-threonyl-[protein] + UDP + H(+). Its pathway is protein modification; protein glycosylation. In terms of biological role, catalyzes the initial reaction in O-linked oligosaccharide biosynthesis, the transfer of an N-acetyl-D-galactosamine (GalNAc) residue from UDP-GalNAc to a serine or threonine residue on the protein receptor. Generates GalNAc-O-Ser/Thr structure also known as Tn antigen, which itself is immunogenic but also serves as a precursor for the synthesis of different mucin-type O-glycan core structures. Contributes to the synthesis of O-linked glycans on mucins and proteoglycans of the central nervous system. Can glycosylate both unmodified peptides and glycopeptides that already contain an O-linked GalNAc sugar. Transfers GalNAc to Thr-/Ser-rich tandem repeats GTTPSPVPTTSTTSAP of MUC5AC. Transfers GalNAc to three consecutive serine/threonine residues on SDC3 forming a triplet-Tn epitope expressed in Purkinje cells of the developing brain. May promote neurogenesis through glycosylation and stabilization of PDPN. In Mus musculus (Mouse), this protein is Polypeptide N-acetylgalactosaminyltransferase 13 (Galnt13).